The primary structure comprises 460 residues: Probable glucan endo-1,3-beta-glucosidase eglC (460 aa).

Positions 1-18 (MQLAQLAAFAMTLATSEA) are cleaved as a signal peptide. The active-site Proton donor is Glu-128. A glycan (N-linked (GlcNAc...) asparagine) is linked at Asn-183. Glu-239 (nucleophile) is an active-site residue. Asn-312, Asn-367, and Asn-373 each carry an N-linked (GlcNAc...) asparagine glycan. The disordered stretch occupies residues 379-437 (RPSGSASARPSAGAISSGSGSSSSGSGSSGSTGTSATSGQSSSSGSSAAAGSSSPAAFS). A compositionally biased stretch (low complexity) spans 380–437 (PSGSASARPSAGAISSGSGSSSSGSGSSGSTGTSATSGQSSSSGSSAAAGSSSPAAFS). Ser-430 carries GPI-anchor amidated serine lipidation. Residues 431 to 460 (SSPAAFSGASTLSGSLFGAVVAVFMTLAAL) constitute a propeptide, removed in mature form.

It belongs to the glycosyl hydrolase 17 family. In terms of processing, the GPI-anchor is attached to the protein in the endoplasmic reticulum and serves to target the protein to the cell surface. There, the glucosamine-inositol phospholipid moiety is cleaved off and the GPI-modified mannoprotein is covalently attached via its lipidless GPI glycan remnant to the 1,6-beta-glucan of the outer cell wall layer.

Its subcellular location is the cell membrane. It is found in the secreted. The protein resides in the cell wall. The enzyme catalyses Hydrolysis of (1-&gt;3)-beta-D-glucosidic linkages in (1-&gt;3)-beta-D-glucans.. Glucanases play a role in cell expansion during growth, in cell-cell fusion during mating, and in spore release during sporulation. This enzyme may be involved in beta-glucan degradation and also function biosynthetically as a transglycosylase. The sequence is that of Probable glucan endo-1,3-beta-glucosidase eglC (eglC) from Aspergillus niger (strain ATCC MYA-4892 / CBS 513.88 / FGSC A1513).